Reading from the N-terminus, the 632-residue chain is tRNA uridine 5-carboxymethylaminomethyl modification enzyme MnmG (632 aa).

Residue 13–18 participates in FAD binding; sequence GGGHAG. Residue 273–287 participates in NAD(+) binding; that stretch reads GPRYCPSIEDKIHRF.

It belongs to the MnmG family. As to quaternary structure, homodimer. Heterotetramer of two MnmE and two MnmG subunits. Requires FAD as cofactor.

It localises to the cytoplasm. Functionally, NAD-binding protein involved in the addition of a carboxymethylaminomethyl (cmnm) group at the wobble position (U34) of certain tRNAs, forming tRNA-cmnm(5)s(2)U34. This Psychrobacter arcticus (strain DSM 17307 / VKM B-2377 / 273-4) protein is tRNA uridine 5-carboxymethylaminomethyl modification enzyme MnmG.